The following is a 602-amino-acid chain: Elongation factor 4 (602 aa).

Residues 2 to 184 form the tr-type G domain; that stretch reads NHIRNFSIIA…QIVAKVPAPR (183 aa). GTP contacts are provided by residues 14 to 19 and 131 to 134; these read DHGKST and NKMD.

This sequence belongs to the TRAFAC class translation factor GTPase superfamily. Classic translation factor GTPase family. LepA subfamily.

It localises to the cell inner membrane. It carries out the reaction GTP + H2O = GDP + phosphate + H(+). Required for accurate and efficient protein synthesis under certain stress conditions. May act as a fidelity factor of the translation reaction, by catalyzing a one-codon backward translocation of tRNAs on improperly translocated ribosomes. Back-translocation proceeds from a post-translocation (POST) complex to a pre-translocation (PRE) complex, thus giving elongation factor G a second chance to translocate the tRNAs correctly. Binds to ribosomes in a GTP-dependent manner. The polypeptide is Elongation factor 4 (Acidovorax ebreus (strain TPSY) (Diaphorobacter sp. (strain TPSY))).